We begin with the raw amino-acid sequence, 265 residues long: Hydroxyethylthiazole kinase (265 aa).

Met-50 is a substrate binding site. Residues Arg-125 and Thr-171 each coordinate ATP. Gly-198 lines the substrate pocket.

This sequence belongs to the Thz kinase family. It depends on Mg(2+) as a cofactor.

The catalysed reaction is 5-(2-hydroxyethyl)-4-methylthiazole + ATP = 4-methyl-5-(2-phosphooxyethyl)-thiazole + ADP + H(+). The protein operates within cofactor biosynthesis; thiamine diphosphate biosynthesis; 4-methyl-5-(2-phosphoethyl)-thiazole from 5-(2-hydroxyethyl)-4-methylthiazole: step 1/1. Catalyzes the phosphorylation of the hydroxyl group of 4-methyl-5-beta-hydroxyethylthiazole (THZ). In Salmonella paratyphi C (strain RKS4594), this protein is Hydroxyethylthiazole kinase.